A 109-amino-acid chain; its full sequence is uncharacterized protein (109 aa).

The interval 36–109 is disordered; sequence NSSNNLNNNN…KKKKKKRRVK (74 aa). A compositionally biased stretch (low complexity) spans 39–88; the sequence is NNLNNNNFNENNLKNNNNRNGNNNNNNNNNNNNNNNNNNNNNNNNNNNNN. The segment covering 99-109 has biased composition (basic residues); the sequence is QKKKKKKRRVK.

This is an uncharacterized protein from Dictyostelium discoideum (Social amoeba).